The sequence spans 221 residues: 7-cyano-7-deazaguanine synthase (221 aa).

10-20 is an ATP binding site; the sequence is FSGGQDSTTCL. 4 residues coordinate Zn(2+): Cys-187, Cys-196, Cys-199, and Cys-202.

The protein belongs to the QueC family. As to quaternary structure, homodimer. The cofactor is Zn(2+).

It catalyses the reaction 7-carboxy-7-deazaguanine + NH4(+) + ATP = 7-cyano-7-deazaguanine + ADP + phosphate + H2O + H(+). The protein operates within purine metabolism; 7-cyano-7-deazaguanine biosynthesis. Functionally, catalyzes the ATP-dependent conversion of 7-carboxy-7-deazaguanine (CDG) to 7-cyano-7-deazaguanine (preQ(0)). This is 7-cyano-7-deazaguanine synthase from Shouchella clausii (strain KSM-K16) (Alkalihalobacillus clausii).